Here is a 68-residue protein sequence, read N- to C-terminus: Conotoxin Ar5.3 (68 aa).

An N-terminal signal peptide occupies residues 1 to 19 (MLCLPVFIILLLLASPAAS). The propeptide occupies 20–53 (NPLEKRIQNDLIRAALEDADMENDPRSIIDSVKT).

It belongs to the conotoxin T superfamily. In terms of processing, contains 2 disulfide bonds that can be either 'C1-C3, C2-C4' or 'C1-C4, C2-C3', since these disulfide connectivities have been observed for conotoxins with cysteine framework V (for examples, see AC P0DQQ7 and AC P81755). As to expression, expressed by the venom duct.

It localises to the secreted. The chain is Conotoxin Ar5.3 from Conus arenatus (Sand-dusted cone).